A 149-amino-acid polypeptide reads, in one-letter code: Large ribosomal subunit protein bL9 (149 aa).

This sequence belongs to the bacterial ribosomal protein bL9 family.

Its function is as follows. Binds to the 23S rRNA. The polypeptide is Large ribosomal subunit protein bL9 (Geobacillus thermodenitrificans (strain NG80-2)).